Consider the following 157-residue polypeptide: 2-C-methyl-D-erythritol 2,4-cyclodiphosphate synthase (157 aa).

A divalent metal cation is bound by residues Asp-8, His-10, and His-42. 8 to 10 contributes to the 4-CDP-2-C-methyl-D-erythritol 2-phosphate binding site; that stretch reads DVH. Residues 56-58, 132-135, Phe-139, and Arg-142 each bind 4-CDP-2-C-methyl-D-erythritol 2-phosphate; these read DIG and STSE.

This sequence belongs to the IspF family. In terms of assembly, homotrimer. A divalent metal cation serves as cofactor.

It carries out the reaction 4-CDP-2-C-methyl-D-erythritol 2-phosphate = 2-C-methyl-D-erythritol 2,4-cyclic diphosphate + CMP. It functions in the pathway isoprenoid biosynthesis; isopentenyl diphosphate biosynthesis via DXP pathway; isopentenyl diphosphate from 1-deoxy-D-xylulose 5-phosphate: step 4/6. Involved in the biosynthesis of isopentenyl diphosphate (IPP) and dimethylallyl diphosphate (DMAPP), two major building blocks of isoprenoid compounds. Catalyzes the conversion of 4-diphosphocytidyl-2-C-methyl-D-erythritol 2-phosphate (CDP-ME2P) to 2-C-methyl-D-erythritol 2,4-cyclodiphosphate (ME-CPP) with a corresponding release of cytidine 5-monophosphate (CMP). This is 2-C-methyl-D-erythritol 2,4-cyclodiphosphate synthase from Dehalococcoides mccartyi (strain ATCC BAA-2266 / KCTC 15142 / 195) (Dehalococcoides ethenogenes (strain 195)).